The chain runs to 65 residues: Conotoxin Lt5.1 (65 aa).

An N-terminal signal peptide occupies residues 1–19 (MRCLPVFIILLLLIPSAPS). Positions 20–48 (VDAQRKTKDDVPLASFHDNAKRTLKRLWN) are excised as a propeptide.

This sequence belongs to the conotoxin T superfamily. Post-translationally, contains 2 disulfide bonds that can be either 'C1-C3, C2-C4' or 'C1-C4, C2-C3', since these disulfide connectivities have been observed for conotoxins with cysteine framework V (for examples, see AC P0DQQ7 and AC P81755). As to expression, expressed by the venom duct.

The protein localises to the secreted. The sequence is that of Conotoxin Lt5.1 from Conus litteratus (Lettered cone).